A 104-amino-acid polypeptide reads, in one-letter code: Vacuolar ATPase assembly integral membrane protein VMA21 (104 aa).

The Cytoplasmic segment spans residues 1–21 (MSNRVSTGKMAMAPQESVQPA). A helical transmembrane segment spans residues 22-42 (VLYKLVLFALLMAVVPIGTYF). The Lumenal segment spans residues 43 to 65 (STLNYLWDGASRCGFPSGLCSTT). A helical membrane pass occupies residues 66-86 (FAAISAIAAANLILVGYVVVA). Over 87–104 (FREDAASRTGPLPEKKTS) the chain is Cytoplasmic. Residues 101-104 (KKTS) carry the Prevents secretion from ER motif.

This sequence belongs to the VMA21 family.

Its subcellular location is the endoplasmic reticulum membrane. It is found in the endoplasmic reticulum-Golgi intermediate compartment membrane. It localises to the cytoplasmic vesicle. The protein localises to the COPII-coated vesicle membrane. Its function is as follows. Required for the assembly of the V0 complex of the vacuolar ATPase (V-ATPase) in the endoplasmic reticulum. The sequence is that of Vacuolar ATPase assembly integral membrane protein VMA21 from Cryptococcus neoformans var. neoformans serotype D (strain B-3501A) (Filobasidiella neoformans).